The following is a 400-amino-acid chain: tRNA(Met) cytidine acetate ligase (400 aa).

ATP-binding positions include 7-20, Gly-101, Asn-162, and Arg-187; that span reads IVEYNPFHNGHQYH.

Belongs to the TmcAL family.

Its subcellular location is the cytoplasm. It carries out the reaction cytidine(34) in elongator tRNA(Met) + acetate + ATP = N(4)-acetylcytidine(34) in elongator tRNA(Met) + AMP + diphosphate. Catalyzes the formation of N(4)-acetylcytidine (ac(4)C) at the wobble position of elongator tRNA(Met), using acetate and ATP as substrates. First activates an acetate ion to form acetyladenylate (Ac-AMP) and then transfers the acetyl group to tRNA to form ac(4)C34. The polypeptide is tRNA(Met) cytidine acetate ligase (Oceanobacillus iheyensis (strain DSM 14371 / CIP 107618 / JCM 11309 / KCTC 3954 / HTE831)).